We begin with the raw amino-acid sequence, 430 residues long: Aspartate aminotransferase, mitochondrial (430 aa).

The N-terminal 28 residues, 1–28 (MALAMMIRNAASKRGMTPISGHFGGLRS), are a transit peptide targeting the mitochondrion. L-aspartate-binding residues include G65, W160, and N213. N6-(pyridoxal phosphate)lysine is present on K277. R405 serves as a coordination point for L-aspartate.

This sequence belongs to the class-I pyridoxal-phosphate-dependent aminotransferase family. Homodimer. It depends on pyridoxal 5'-phosphate as a cofactor.

It localises to the mitochondrion matrix. The enzyme catalyses L-aspartate + 2-oxoglutarate = oxaloacetate + L-glutamate. Functionally, amino acid aminotransferase important for the metabolism of amino acids and Krebs-cycle related organic acids. No activity with D-Asp or D-Ala as amino donors. In plants, it is involved in nitrogen metabolism and in aspects of carbon and energy metabolism. The polypeptide is Aspartate aminotransferase, mitochondrial (ASP1) (Arabidopsis thaliana (Mouse-ear cress)).